A 258-amino-acid polypeptide reads, in one-letter code: 6-carboxyhexanoate--CoA ligase (258 aa).

This sequence belongs to the BioW family. As to quaternary structure, homodimer. The cofactor is Mg(2+).

It catalyses the reaction heptanedioate + ATP + CoA = 6-carboxyhexanoyl-CoA + AMP + diphosphate. It participates in metabolic intermediate metabolism; pimeloyl-CoA biosynthesis; pimeloyl-CoA from pimelate: step 1/1. Its function is as follows. Catalyzes the transformation of pimelate into pimeloyl-CoA with concomitant hydrolysis of ATP to AMP. In Bacillus subtilis (strain BSn5), this protein is 6-carboxyhexanoate--CoA ligase.